The sequence spans 280 residues: Pantothenate synthetase (280 aa).

ATP is bound at residue 31–38; that stretch reads MGNLHAGH. His-38 functions as the Proton donor in the catalytic mechanism. Gln-62 contributes to the (R)-pantoate binding site. Position 62 (Gln-62) interacts with beta-alanine. 150 to 153 provides a ligand contact to ATP; that stretch reads GKKD. Gln-156 is a (R)-pantoate binding site. Residues Val-179 and 187 to 190 each bind ATP; that span reads MSSR.

This sequence belongs to the pantothenate synthetase family. Homodimer.

It localises to the cytoplasm. It catalyses the reaction (R)-pantoate + beta-alanine + ATP = (R)-pantothenate + AMP + diphosphate + H(+). It participates in cofactor biosynthesis; (R)-pantothenate biosynthesis; (R)-pantothenate from (R)-pantoate and beta-alanine: step 1/1. In terms of biological role, catalyzes the condensation of pantoate with beta-alanine in an ATP-dependent reaction via a pantoyl-adenylate intermediate. The polypeptide is Pantothenate synthetase (Xanthomonas axonopodis pv. citri (strain 306)).